A 253-amino-acid polypeptide reads, in one-letter code: Triosephosphate isomerase (253 aa).

8–10 contributes to the substrate binding site; sequence NWK. Histidine 93 acts as the Electrophile in catalysis. Glutamate 165 serves as the catalytic Proton acceptor. Substrate contacts are provided by residues glycine 171, serine 210, and 231-232; that span reads GG.

Belongs to the triosephosphate isomerase family. In terms of assembly, homodimer.

It is found in the cytoplasm. It catalyses the reaction D-glyceraldehyde 3-phosphate = dihydroxyacetone phosphate. The protein operates within carbohydrate biosynthesis; gluconeogenesis. It participates in carbohydrate degradation; glycolysis; D-glyceraldehyde 3-phosphate from glycerone phosphate: step 1/1. Involved in the gluconeogenesis. Catalyzes stereospecifically the conversion of dihydroxyacetone phosphate (DHAP) to D-glyceraldehyde-3-phosphate (G3P). This Francisella tularensis subsp. mediasiatica (strain FSC147) protein is Triosephosphate isomerase.